The chain runs to 262 residues: 3-methyl-2-oxobutanoate hydroxymethyltransferase (262 aa).

Mg(2+) is bound by residues Asp42 and Asp81. 3-methyl-2-oxobutanoate is bound by residues 42 to 43 (DS), Asp81, and Lys110. Glu112 contacts Mg(2+). Glu180 (proton acceptor) is an active-site residue.

The protein belongs to the PanB family. As to quaternary structure, homodecamer; pentamer of dimers. The cofactor is Mg(2+).

Its subcellular location is the cytoplasm. It catalyses the reaction 3-methyl-2-oxobutanoate + (6R)-5,10-methylene-5,6,7,8-tetrahydrofolate + H2O = 2-dehydropantoate + (6S)-5,6,7,8-tetrahydrofolate. It participates in cofactor biosynthesis; (R)-pantothenate biosynthesis; (R)-pantoate from 3-methyl-2-oxobutanoate: step 1/2. Catalyzes the reversible reaction in which hydroxymethyl group from 5,10-methylenetetrahydrofolate is transferred onto alpha-ketoisovalerate to form ketopantoate. This is 3-methyl-2-oxobutanoate hydroxymethyltransferase from Legionella pneumophila subsp. pneumophila (strain Philadelphia 1 / ATCC 33152 / DSM 7513).